A 371-amino-acid chain; its full sequence is Maltose/maltodextrin import ATP-binding protein MalK (371 aa).

An ABC transporter domain is found at 4–234 (VTLKNVCKAY…PENRFVAGFI (231 aa)). Position 36-43 (36-43 (GPSGCGKS)) interacts with ATP.

Belongs to the ABC transporter superfamily. Maltooligosaccharide importer (TC 3.A.1.1.1) family. As to quaternary structure, the complex is composed of two ATP-binding proteins (MalK), two transmembrane proteins (MalG and MalK) and a solute-binding protein (MalE).

The protein localises to the cell inner membrane. The enzyme catalyses D-maltose(out) + ATP + H2O = D-maltose(in) + ADP + phosphate + H(+). Functionally, part of the ABC transporter complex MalEFGK involved in maltose/maltodextrin import. Responsible for energy coupling to the transport system. This is Maltose/maltodextrin import ATP-binding protein MalK from Vibrio vulnificus (strain CMCP6).